The following is a 410-amino-acid chain: Na(+)/H(+) antiporter NhaA 1/4 (410 aa).

11 consecutive transmembrane segments (helical) span residues 16 to 36 (VGGS…NSPL), 55 to 75 (LNLS…FFIV), 95 to 115 (ALPI…FLAF), 125 to 145 (GGWG…LAVV), 156 to 176 (FLLT…AVAC), 178 to 198 (SGIN…FGYL), 215 to 235 (AWLL…ACGV), 275 to 295 (IALP…AGGF), 299 to 319 (AITW…IFGG), 340 to 360 (IAGI…IAEL), and 371 to 391 (AKGA…LLLG).

The protein belongs to the NhaA Na(+)/H(+) (TC 2.A.33) antiporter family.

Its subcellular location is the cell membrane. It catalyses the reaction Na(+)(in) + 2 H(+)(out) = Na(+)(out) + 2 H(+)(in). In terms of biological role, na(+)/H(+) antiporter that extrudes sodium in exchange for external protons. This Streptomyces coelicolor (strain ATCC BAA-471 / A3(2) / M145) protein is Na(+)/H(+) antiporter NhaA 1/4.